Here is a 626-residue protein sequence, read N- to C-terminus: Trehalase (626 aa).

2 helical membrane passes run Lys20–Leu40 and Ser45–Ser65. The alpha,alpha-trehalose site is built by Arg224, Asp232, Asn268, Arg277, Gln279, Arg344, and Glu346. Catalysis depends on proton donor/acceptor residues Asp380 and Glu580. 2 residues coordinate alpha,alpha-trehalose: Glu580 and Glu595.

Belongs to the glycosyl hydrolase 37 family. In terms of assembly, forms homodimers. Highly expressed in flowers. Expressed at low levels in leaves and stems. Expressed in guard cells.

It is found in the cell membrane. Its subcellular location is the cytoplasm. The protein resides in the nucleus. The catalysed reaction is alpha,alpha-trehalose + H2O = alpha-D-glucose + beta-D-glucose. Its function is as follows. Involved in the regulation of trehalose content by hydrolyzing trehalose to glucose. May play a role in the regulation of abscisic acid-induced stomatal closure in response to drought stress. This chain is Trehalase (TRE1), found in Arabidopsis thaliana (Mouse-ear cress).